A 283-amino-acid chain; its full sequence is Shikimate dehydrogenase (NADP(+)) (283 aa).

Residues Ser19–Ser21 and Thr66 contribute to the shikimate site. Lys70 functions as the Proton acceptor in the catalytic mechanism. Glu82 provides a ligand contact to NADP(+). 2 residues coordinate shikimate: Asn91 and Asp106. NADP(+)-binding positions include Gly129–Ala133 and Ile225. Tyr227 provides a ligand contact to shikimate. Position 248 (Gly248) interacts with NADP(+).

It belongs to the shikimate dehydrogenase family. In terms of assembly, homodimer.

It carries out the reaction shikimate + NADP(+) = 3-dehydroshikimate + NADPH + H(+). Its pathway is metabolic intermediate biosynthesis; chorismate biosynthesis; chorismate from D-erythrose 4-phosphate and phosphoenolpyruvate: step 4/7. Functionally, involved in the biosynthesis of the chorismate, which leads to the biosynthesis of aromatic amino acids. Catalyzes the reversible NADPH linked reduction of 3-dehydroshikimate (DHSA) to yield shikimate (SA). The sequence is that of Shikimate dehydrogenase (NADP(+)) from Methanosphaera stadtmanae (strain ATCC 43021 / DSM 3091 / JCM 11832 / MCB-3).